The sequence spans 541 residues: Lysosomal cobalamin transport escort protein LMBD1 (541 aa).

Topologically, residues 1-11 (MATPVALLSES) are extracellular. A helical transmembrane segment spans residues 12 to 31 (VLGWSIFTVVLLVILAFCWV). The Cytoplasmic segment spans residues 32–50 (YIRKYQSRQESEVISTITA). The chain crosses the membrane as a helical span at residues 51 to 71 (ICALAIALITSALLPVDIFLV). Over 72–101 (SFMKHPNGTYKEWAANNETRVQIEDTVLYG) the chain is Extracellular. N-linked (GlcNAc...) asparagine glycans are attached at residues asparagine 78 and asparagine 88. Residues 102–122 (YYTLYSIILFCVFLWIPFVYF) traverse the membrane as a helical segment. At 123–145 (YYEEKDEDNNNKCLQVKNALKYT) the chain is on the cytoplasmic side. A helical transmembrane segment spans residues 146–166 (IGFVIVCSALLLIGTFVPLAS). Topologically, residues 167–189 (PPNQNSTQWQKVQYLFEELGSSH) are extracellular. Asparagine 171 carries an N-linked (GlcNAc...) asparagine glycan. Residues 190–210 (GLAALSFSISSLTLIGMLAVI) traverse the membrane as a helical segment. The Cytoplasmic portion of the chain corresponds to 211–306 (TYTAYGMSVL…KVGSALRPMK (96 aa)). The helical transmembrane segment at 307-327 (ILLGVFFILVALLFFVTLFIS) threads the bilayer. The Extracellular segment spans residues 328–365 (NLDKALHSAGISTGFIIFGTNLTNPLNELLLALQPVFP). N-linked (GlcNAc...) asparagine glycosylation is present at asparagine 348. The helical transmembrane segment at 366 to 386 (LDYVLITVITMYFVFTSMAGI) threads the bilayer. At 387–409 (RNMGIWFFWIRLYKIRPQRTRPQ) the chain is on the cytoplasmic side. A helical transmembrane segment spans residues 410 to 430 (ALLFLCMILLLIVLHTSYMIY). Residues 431-488 (SLAPQYVMYGSQKYLLQTPLPTAVPSQSNRSATITKICDADAPEDQCTVTRSYLFLHK) lie on the Extracellular side of the membrane. Asparagine 459 carries an N-linked (GlcNAc...) asparagine glycan. Residues 489 to 509 (FWFFSTIYYFGNWAFLGVFLI) form a helical membrane-spanning segment. At 510–541 (GLVVSCCKGKKSVIEGEVDADDSDFSDDEYVH) the chain is on the cytoplasmic side.

It belongs to the LIMR family. LMBRD1 subfamily.

It localises to the endoplasmic reticulum membrane. The protein localises to the lysosome membrane. The protein resides in the cell membrane. Lysosomal membrane chaperone required to export cobalamin (vitamin B12) from the lysosome to the cytosol, allowing its conversion to cofactors. Targets ABCD4 transporter from the endoplasmic reticulum to the lysosome. Then forms a complex with lysosomal ABCD4 and cytoplasmic MMACHC to transport cobalamin across the lysosomal membrane. May play a role in mediating and regulating the internalization of the insulin receptor. The sequence is that of Lysosomal cobalamin transport escort protein LMBD1 (lmbrd1) from Danio rerio (Zebrafish).